A 183-amino-acid polypeptide reads, in one-letter code: Capsid protein (183 aa).

The disordered stretch occupies residues 136-183; the sequence is NAPILSTLPETTVVRRRGRSPRRRTPSPRRRRSQSPRRRRSQSRESQC. Basic residues predominate over residues 149 to 176; it reads VRRRGRSPRRRTPSPRRRRSQSPRRRRS. Ser-155, Ser-162, and Ser-170 each carry phosphoserine; by host. A 1; half-length repeat occupies 155-161; sequence SPRRRTP. Residues 155 to 177 are 3 X 8 AA repeats of S-P-R-R-R-[PR]-S-Q; sequence SPRRRTPSPRRRRSQSPRRRRSQ. The Bipartite nuclear localization signal signature appears at 158–175; sequence RRTPSPRRRRSQSPRRRR. A run of 2 repeats spans residues 162–169 and 170–177. Residues 177 to 183 form an RNA binding region; the sequence is QSRESQC.

The protein belongs to the orthohepadnavirus core antigen family. In terms of assembly, homodimerizes, then multimerizes. Interacts with cytosol exposed regions of viral L glycoprotein present in the reticulum-to-Golgi compartment. Interacts with human FLNB. Phosphorylated form interacts with host importin alpha; this interaction depends on the exposure of the NLS, which itself depends upon genome maturation and/or phosphorylation of the capsid protein. Interacts with host NUP153. Phosphorylated by host SRPK1, SRPK2, and maybe protein kinase C or GAPDH. Phosphorylation is critical for pregenomic RNA packaging. Protein kinase C phosphorylation is stimulated by HBx protein and may play a role in transport of the viral genome to the nucleus at the late step during the viral replication cycle.

It localises to the virion. Its subcellular location is the host cytoplasm. In terms of biological role, self assembles to form an icosahedral capsid. Most capsids appear to be large particles with an icosahedral symmetry of T=4 and consist of 240 copies of capsid protein, though a fraction forms smaller T=3 particles consisting of 180 capsid proteins. Entering capsids are transported along microtubules to the nucleus. Phosphorylation of the capsid is thought to induce exposure of nuclear localization signal in the C-terminal portion of the capsid protein that allows binding to the nuclear pore complex via the importin (karyopherin-) alpha and beta. Capsids are imported in intact form through the nuclear pore into the nuclear basket, where it probably binds NUP153. Only capsids that contain the mature viral genome can release the viral DNA and capsid protein into the nucleoplasm. Immature capsids get stuck in the basket. Capsids encapsulate the pre-genomic RNA and the P protein. Pre-genomic RNA is reverse-transcribed into DNA while the capsid is still in the cytoplasm. The capsid can then either be directed to the nucleus, providing more genomes for transcription, or bud through the endoplasmic reticulum to provide new virions. This Hepatitis B virus genotype B1 subtype adw (isolate Japan/pJDW233/1988) (HBV-B) protein is Capsid protein.